The following is a 345-amino-acid chain: Nuclear distribution protein nudE-like 1 (345 aa).

The stretch at 28–190 forms a coiled coil; that stretch reads QSFQEARDEL…LAVRERQQEV (163 aa). The interval 56 to 166 is self-association; the sequence is VQAEQRNRDL…LDEKESLLVS (111 aa). Positions 64–189 are interaction with KATNB1; that stretch reads DLQADNQRLK…ELAVRERQQE (126 aa). The required for interaction with PAFAH1B1 stretch occupies residues 114 to 133; sequence YVRELEQANDDLERAKRATI. The segment at 175-345 is interaction with CENPF; it reads RDLRQELAVR…SAPGMLPLSV (171 aa). An interaction with YWHAE region spans residues 189-256; the sequence is EVTRKSAPSS…SARISALNIV (68 aa). Residues 191-345 form an interaction with NEFL region; sequence TRKSAPSSPT…SAPGMLPLSV (155 aa). An interaction with KATNA1 region spans residues 195–256; the sequence is APSSPTLDCE…SARISALNIV (62 aa). S215 bears the Phosphoserine mark. The tract at residues 217-240 is disordered; that stretch reads PATPVGKGTENSFPSPKAIPNGFG. Residue T219 is modified to Phosphothreonine. S231 carries the post-translational modification Phosphoserine. The interaction with DISC1 stretch occupies residues 241–280; the sequence is TSPLTPSARISALNIVGDLLRKVGALESKLAACRNFAKDQ. S242 carries the phosphoserine; by CDK1 modification. T245 bears the Phosphothreonine; by CDK1 and MAPK1 mark. Positions 256-291 are required for localization to the centrosome and interaction with dynein, dynactin, tubulin gamma, PCM1 and PCNT; sequence VGDLLRKVGALESKLAACRNFAKDQASRKSYVPGSV. A lipid anchor (S-palmitoyl cysteine; by ZDHHC2, ZDHHC3 and ZDHHC7) is attached at C273. The interval 314–345 is disordered; that stretch reads KGAVNGFDPAPPPPGLGSSRPSSAPGMLPLSV. Over residues 329–339 the composition is skewed to low complexity; it reads LGSSRPSSAPG. The residue at position 344 (S344) is a Phosphoserine.

The protein belongs to the nudE family. As to quaternary structure, interacts with PLEKHM1 (via N- and C-terminus). Interacts with dynactin, PCM1 and PCNT. Interacts (via C-terminus) with CENPF. Self-associates. Interacts with DISC1, dynein, tubulin gamma, KATNA1, KATNB1, microtubules, PAFAHB1 and YWHAE. Interacts directly with NEFL and indirectly with NEFH. Interacts with ZNF365. Interacts with GTP-bound RAB9A; the interaction may lead to RAB9A-dynein motor tethering. In terms of processing, phosphorylated by CDK1 and MAPK1. Phosphorylated in mitosis. Phosphorylated by CDK5. Phosphorylation by CDK5 promotes interaction with KATNA1 and YWHAE. Palmitoylation at Cys-273 reduces affinity for dynein. Expressed in brain, liver, lung and testis (at protein level). Expressed in brain, epididymis, eye, heart, kidney, large intestine, liver, ovary, pancreas, prostate, skeletal muscle, smooth muscle, spleen, submaxillary gland, testis, thymus and thyroid. Within the brain expression is pronounced in the cortex, hippocampus, olfactory bulb, striatum, thalamic and hypothalamic structures and in the molecular layer of the cerebellum. Largely excluded from cortical progenitor cells which express NDE1.

It is found in the cytoplasm. The protein localises to the cytoskeleton. The protein resides in the microtubule organizing center. Its subcellular location is the centrosome. It localises to the chromosome. It is found in the centromere. The protein localises to the kinetochore. The protein resides in the spindle. Functionally, required for organization of the cellular microtubule array and microtubule anchoring at the centrosome. May regulate microtubule organization at least in part by targeting the microtubule severing protein KATNA1 to the centrosome. Also positively regulates the activity of the minus-end directed microtubule motor protein dynein. May enhance dynein-mediated microtubule sliding by targeting dynein to the microtubule plus ends. Required for several dynein- and microtubule-dependent processes such as the maintenance of Golgi integrity, the centripetal motion of secretory vesicles and the coupling of the nucleus and centrosome. Also required during brain development for the migration of newly formed neurons from the ventricular/subventricular zone toward the cortical plate. Plays a role, together with DISC1, in the regulation of neurite outgrowth. Required for mitosis in some cell types but appears to be dispensible for mitosis in cortical neuronal progenitors, which instead requires NDE1. Facilitates the polymerization of neurofilaments from the individual subunits NEFH and NEFL. Positively regulates lysosome peripheral distribution and ruffled border formation in osteoclasts. Plays a role, together with DISC1, in the regulation of neurite outgrowth. May act as a RAB9A/B effector that tethers RAB9-associated late endosomes to the dynein motor for their retrograde transport to the trans-Golgi network. The polypeptide is Nuclear distribution protein nudE-like 1 (Mus musculus (Mouse)).